The sequence spans 572 residues: Phosphoenolpyruvate-protein phosphotransferase (572 aa).

The active-site Tele-phosphohistidine intermediate is the histidine 190. Residues arginine 297 and arginine 333 each contribute to the phosphoenolpyruvate site. The Mg(2+) site is built by glutamate 432 and aspartate 456. Phosphoenolpyruvate-binding positions include 455-456 (ND) and arginine 466. The active-site Proton donor is cysteine 503.

This sequence belongs to the PEP-utilizing enzyme family. Homodimer. It depends on Mg(2+) as a cofactor.

It localises to the cytoplasm. It carries out the reaction L-histidyl-[protein] + phosphoenolpyruvate = N(pros)-phospho-L-histidyl-[protein] + pyruvate. Its function is as follows. General (non sugar-specific) component of the phosphoenolpyruvate-dependent sugar phosphotransferase system (sugar PTS). This major carbohydrate active-transport system catalyzes the phosphorylation of incoming sugar substrates concomitantly with their translocation across the cell membrane. Enzyme I transfers the phosphoryl group from phosphoenolpyruvate (PEP) to the phosphoryl carrier protein (HPr). This is Phosphoenolpyruvate-protein phosphotransferase (ptsI) from Listeria monocytogenes serovar 1/2a (strain ATCC BAA-679 / EGD-e).